The sequence spans 189 residues: UPF0149 protein VFMJ11_2207 (189 aa).

The protein belongs to the UPF0149 family.

The chain is UPF0149 protein VFMJ11_2207 from Aliivibrio fischeri (strain MJ11) (Vibrio fischeri).